Consider the following 315-residue polypeptide: Neurogenic differentiation factor 4 (315 aa).

Residues Glu39–Ala71 are disordered. The span at Asp44–Gly55 shows a compositional bias: acidic residues. Over residues Pro58 to Lys70 the composition is skewed to basic residues. Positions Val78–Leu130 constitute a bHLH domain. Ser89 carries the post-translational modification Phosphoserine.

As to quaternary structure, efficient DNA binding requires dimerization with another bHLH protein. Forms a heterodimer with the bHLH protein hes2, and weakly interacts with hey1/hrt1. In terms of processing, serine or threonine phosphorylation within the basic region may regulate neurogenic activity. As to expression, first expressed weakly at stage 12 in primary neuronal precursors. At stages 18 and 21, strongly expressed in the cranial ganglions, with weaker expression remaining in the spinal cord. Later, strongly expressed at sites of neuronal differentiation, namely the eye, forebrain and cranial ganglions.

Its subcellular location is the nucleus. Probably acts as a transcriptional activator. Mediates neuronal differentiation. Required for the regulation of amacrine cell fate specification in the retina. The protein is Neurogenic differentiation factor 4 (neurod4) of Xenopus laevis (African clawed frog).